The sequence spans 319 residues: MGTWRRLLLFGGVSLRGGGAATVPPRGCRALGCGRQLLGAESEALKQRRTQIMSRGLPKQKPIEGVREVIVVASGKGGVGKSTTAVNLALALAANDSSKAVGLLDVDVYGPSIPKMMNLRGNPELSPNNLMRPLLNYGIACMSMGFLVEETAPLVWRGLMVMSAIEKLLRQVDWGQLDYLVVDMPPGTGDVQLSVSQNIPISGAVIVSTPQDIALMDAHKGAEMFRKVNVPVLGLVQNMSVFQCPKCKHKTHIFGADGARKLAQTLDLDVLGDVPLHLSIREASDMGQPVVFSQPGSDEAKAYLHIASEVVRRLKSSPE.

The transit peptide at 1–38 (MGTWRRLLLFGGVSLRGGGAATVPPRGCRALGCGRQLL) directs the protein to the mitochondrion. Residue 75–82 (GKGGVGKS) participates in ATP binding.

Belongs to the Mrp/NBP35 ATP-binding proteins family. It depends on [4Fe-4S] cluster as a cofactor.

The protein resides in the mitochondrion. Iron-sulfur cluster transfer protein involved in the assembly of the mitochondrial membrane respiratory chain NADH dehydrogenase (Complex I). May deliver one or more Fe-S clusters to complex I subunits. The protein is Iron-sulfur cluster transfer protein NUBPL (Nubpl) of Mus musculus (Mouse).